A 207-amino-acid polypeptide reads, in one-letter code: Large ribosomal subunit protein uL4 (207 aa).

A disordered region spans residues 54–76 (RSAVRGGGRKPWRQKGTGRARQG). Basic residues predominate over residues 60–71 (GGRKPWRQKGTG).

This sequence belongs to the universal ribosomal protein uL4 family. In terms of assembly, part of the 50S ribosomal subunit.

Its function is as follows. One of the primary rRNA binding proteins, this protein initially binds near the 5'-end of the 23S rRNA. It is important during the early stages of 50S assembly. It makes multiple contacts with different domains of the 23S rRNA in the assembled 50S subunit and ribosome. Forms part of the polypeptide exit tunnel. This chain is Large ribosomal subunit protein uL4, found in Staphylococcus haemolyticus (strain JCSC1435).